A 165-amino-acid polypeptide reads, in one-letter code: Cyclic pyranopterin monophosphate synthase (165 aa).

Substrate is bound by residues Met-76–His-78 and Ile-113–Glu-114. Residue Asp-128 is part of the active site.

It belongs to the MoaC family. Homohexamer; trimer of dimers.

The enzyme catalyses (8S)-3',8-cyclo-7,8-dihydroguanosine 5'-triphosphate = cyclic pyranopterin phosphate + diphosphate. It participates in cofactor biosynthesis; molybdopterin biosynthesis. Functionally, catalyzes the conversion of (8S)-3',8-cyclo-7,8-dihydroguanosine 5'-triphosphate to cyclic pyranopterin monophosphate (cPMP). The protein is Cyclic pyranopterin monophosphate synthase of Limosilactobacillus fermentum (strain NBRC 3956 / LMG 18251) (Lactobacillus fermentum).